Here is a 404-residue protein sequence, read N- to C-terminus: MMTYEYILVRYGEMTTKGKNRSKFVSTLKDNVKFKLKKFPNIKIDATHDRMYIQLNGEDHEAVSERLKDVFGIHKFNLAMKVPSELEDIKKGALAAFLQVKGDVKTFKITVHRSYKHFPMRTMELLPEIGGHILENTEDITVDVHNPDVNVRVEIRSGYSYIMCDERMGAGGLPVGVGGKVMVLLSGGIDSPVAAYLTMKRGVSVEAVHFHSPPFTSERAKQKVIDLAQELTKYCKRVTLHLVPFTEVQKTINKEIPSSYSMTVMRRMMMRITERIAEERNALAITTGESLGQVASQTLDSMHTINEVTNYPIIRPLITMDKLEIIKIAEEIGTYDISIRPYEDCCTVFTPASPATKPKREKANRFEAKYDFTPLIDEAVANKETMVLQTVEVVAEEEKFEELF.

The THUMP domain occupies 61–166 (EAVSERLKDV…SGYSYIMCDE (106 aa)). Residues 184-185 (LL), 209-210 (HF), Arg266, Gly288, and Gln297 contribute to the ATP site.

Belongs to the ThiI family.

Its subcellular location is the cytoplasm. The catalysed reaction is [ThiI sulfur-carrier protein]-S-sulfanyl-L-cysteine + a uridine in tRNA + 2 reduced [2Fe-2S]-[ferredoxin] + ATP + H(+) = [ThiI sulfur-carrier protein]-L-cysteine + a 4-thiouridine in tRNA + 2 oxidized [2Fe-2S]-[ferredoxin] + AMP + diphosphate. The enzyme catalyses [ThiS sulfur-carrier protein]-C-terminal Gly-Gly-AMP + S-sulfanyl-L-cysteinyl-[cysteine desulfurase] + AH2 = [ThiS sulfur-carrier protein]-C-terminal-Gly-aminoethanethioate + L-cysteinyl-[cysteine desulfurase] + A + AMP + 2 H(+). It participates in cofactor biosynthesis; thiamine diphosphate biosynthesis. Its function is as follows. Catalyzes the ATP-dependent transfer of a sulfur to tRNA to produce 4-thiouridine in position 8 of tRNAs, which functions as a near-UV photosensor. Also catalyzes the transfer of sulfur to the sulfur carrier protein ThiS, forming ThiS-thiocarboxylate. This is a step in the synthesis of thiazole, in the thiamine biosynthesis pathway. The sulfur is donated as persulfide by IscS. The polypeptide is Probable tRNA sulfurtransferase (Bacillus cereus (strain AH187)).